The chain runs to 191 residues: Small ribosomal subunit protein uS9c (191 aa).

The tract at residues 166-191 is disordered; it reads TQDSRVKERRKYGLKKARKASQYHKR. The span at 172–191 shows a compositional bias: basic residues; that stretch reads KERRKYGLKKARKASQYHKR.

This sequence belongs to the universal ribosomal protein uS9 family.

The protein resides in the plastid. Its subcellular location is the chloroplast. The polypeptide is Small ribosomal subunit protein uS9c (rps9) (Chlamydomonas reinhardtii (Chlamydomonas smithii)).